A 420-amino-acid chain; its full sequence is 3-isopropylmalate dehydratase large subunit (420 aa).

3 residues coordinate [4Fe-4S] cluster: C300, C360, and C363.

This sequence belongs to the aconitase/IPM isomerase family. LeuC type 2 subfamily. As to quaternary structure, heterodimer of LeuC and LeuD. [4Fe-4S] cluster is required as a cofactor.

The enzyme catalyses (2R,3S)-3-isopropylmalate = (2S)-2-isopropylmalate. The protein operates within amino-acid biosynthesis; L-leucine biosynthesis; L-leucine from 3-methyl-2-oxobutanoate: step 2/4. Functionally, catalyzes the isomerization between 2-isopropylmalate and 3-isopropylmalate, via the formation of 2-isopropylmaleate. This Heliobacterium modesticaldum (strain ATCC 51547 / Ice1) protein is 3-isopropylmalate dehydratase large subunit.